A 502-amino-acid chain; its full sequence is Sodium/proline symporter (502 aa).

Helical transmembrane passes span 6–26, 42–62, 68–88, 127–147, 163–183, 192–212, 235–255, 276–296, 320–340, 371–391, 398–418, 430–450, and 452–472; these read PMLVTFCVYIFGMILIGFIAW, LGPFVTALSAGASDMSGWLLM, IFLSGISESWIAIGLTLGAWI, IISALVILLFFTIYCASGIVA, ALWAGAAATIIYTFIGGFLAV, SLMIFALILTPVMVIVGVGGF, FVAIISLMGWGLGYFGQPHIL, TWMILCLAGAVAVGFFGIAYF, ILFNPWIAGVLLSAILAAVMS, LVWVGRVMVLVVALIAIALAA, LGLVSYAWAGFGAAFGPVVLF, ALAGMIIGAVTVIVWKQYGWL, and LYEIIPGFIFGSLGIVIFSLL.

It belongs to the sodium:solute symporter (SSF) (TC 2.A.21) family.

It localises to the cell inner membrane. It carries out the reaction L-proline(in) + Na(+)(in) = L-proline(out) + Na(+)(out). Its function is as follows. Catalyzes the sodium-dependent uptake of extracellular L-proline. The sequence is that of Sodium/proline symporter from Salmonella typhimurium (strain LT2 / SGSC1412 / ATCC 700720).